A 1040-amino-acid polypeptide reads, in one-letter code: Multidrug resistance protein MdtB (1040 aa).

11 helical membrane passes run 15–37 (LFIM…GIIG), 345–362 (FELM…YLFL), 367–389 (ATII…MVFL), 396–418 (LTLM…VIEN), 438–460 (GEIG…PLLF), 472–494 (FAIT…TPMM), 535–557 (HPWL…WVFI), 867–889 (VWLI…ESFI), 909–931 (LMIA…IGIV), 968–990 (ILMT…GVGA), and 1000–1022 (MVGG…YLLF).

Belongs to the resistance-nodulation-cell division (RND) (TC 2.A.6) family. MdtB subfamily. Part of a tripartite efflux system composed of MdtA, MdtB and MdtC. MdtB forms a heteromultimer with MdtC.

It is found in the cell inner membrane. In terms of biological role, the MdtABC tripartite complex confers resistance against novobiocin and deoxycholate. The polypeptide is Multidrug resistance protein MdtB (Escherichia coli O157:H7).